A 601-amino-acid chain; its full sequence is Glutamine--fructose-6-phosphate aminotransferase [isomerizing] (601 aa).

Cys2 (nucleophile; for GATase activity) is an active-site residue. In terms of domain architecture, Glutamine amidotransferase type-2 spans 2-218 (CGIVGYIGYD…DHEIVIVKKD (217 aa)). SIS domains are found at residues 284 to 423 (IIND…EHGR) and 453 to 591 (IATD…VDKP). The For Fru-6P isomerization activity role is filled by Lys596.

As to quaternary structure, homodimer.

It localises to the cytoplasm. It carries out the reaction D-fructose 6-phosphate + L-glutamine = D-glucosamine 6-phosphate + L-glutamate. Its function is as follows. Catalyzes the first step in hexosamine metabolism, converting fructose-6P into glucosamine-6P using glutamine as a nitrogen source. The chain is Glutamine--fructose-6-phosphate aminotransferase [isomerizing] from Staphylococcus aureus (strain Mu50 / ATCC 700699).